The primary structure comprises 316 residues: Transaldolase 2 (316 aa).

Catalysis depends on Lys-131, which acts as the Schiff-base intermediate with substrate.

Belongs to the transaldolase family. Type 1 subfamily. As to quaternary structure, homodimer.

It is found in the cytoplasm. The catalysed reaction is D-sedoheptulose 7-phosphate + D-glyceraldehyde 3-phosphate = D-erythrose 4-phosphate + beta-D-fructose 6-phosphate. It participates in carbohydrate degradation; pentose phosphate pathway; D-glyceraldehyde 3-phosphate and beta-D-fructose 6-phosphate from D-ribose 5-phosphate and D-xylulose 5-phosphate (non-oxidative stage): step 2/3. Functionally, transaldolase is important for the balance of metabolites in the pentose-phosphate pathway. The protein is Transaldolase 2 of Shigella sonnei (strain Ss046).